The primary structure comprises 149 residues: 3-dehydroquinate dehydratase (149 aa).

Catalysis depends on Tyr26, which acts as the Proton acceptor. Substrate is bound by residues Asn77, His83, and Asp90. The Proton donor role is filled by His103. Substrate contacts are provided by residues 104–105 (LS) and Arg114.

It belongs to the type-II 3-dehydroquinase family. As to quaternary structure, homododecamer.

It catalyses the reaction 3-dehydroquinate = 3-dehydroshikimate + H2O. Its pathway is metabolic intermediate biosynthesis; chorismate biosynthesis; chorismate from D-erythrose 4-phosphate and phosphoenolpyruvate: step 3/7. Its function is as follows. Catalyzes a trans-dehydration via an enolate intermediate. The chain is 3-dehydroquinate dehydratase from Haemophilus influenzae (strain 86-028NP).